The following is a 502-amino-acid chain: NAD(P)H-quinone oxidoreductase chain 4, chloroplastic (502 aa).

The next 14 helical transmembrane spans lie at 4-24 (FPWL…IFFF), 37-57 (ICIC…HFQL), 87-107 (VGPI…AWPV), 113-130 (LFHF…GLFS), 134-154 (LLLF…LLSM), 167-187 (FILY…GMGL), 208-228 (ALEI…LPII), 242-262 (HYST…YGLV), 272-292 (AHSI…IYAA), 305-325 (IAYS…SITD), 330-350 (GAIL…FLAG), 374-396 (IFTM…GFAA), 416-436 (ILIT…SLSM), and 464-484 (LFVS…PDFV).

This sequence belongs to the complex I subunit 4 family.

Its subcellular location is the plastid. The protein resides in the chloroplast thylakoid membrane. It carries out the reaction a plastoquinone + NADH + (n+1) H(+)(in) = a plastoquinol + NAD(+) + n H(+)(out). The enzyme catalyses a plastoquinone + NADPH + (n+1) H(+)(in) = a plastoquinol + NADP(+) + n H(+)(out). The chain is NAD(P)H-quinone oxidoreductase chain 4, chloroplastic from Ranunculus macranthus (Large buttercup).